The primary structure comprises 538 residues: SWM histone demethylase complex subunit phf2 (538 aa).

Disordered regions lie at residues 28-47, 98-150, and 198-222; these read RFPN…NQNG, EIES…SSPL, and TKSG…RRRG. Over residues 98 to 111 the composition is skewed to basic and acidic residues; that stretch reads EIESSKNQETDAKS. Residues 232–288 form a PHD-type zinc finger; it reads AMKCSVCQRLQSPPKNRIVFCDGCNTPFHQLCHEPYISDELLDSPNGEWFCDDCIRR. Positions 367–392 are enriched in polar residues; it reads GDQYLSLNNGTESQSKTTKHSTSLPS. A disordered region spans residues 367–396; sequence GDQYLSLNNGTESQSKTTKHSTSLPSTEPV.

Component of the SWM histone demethylase complex composed of at least lsd1, lsd2, phf1 and phf2.

Its subcellular location is the nucleus. Its function is as follows. Component of the SWM histone demethylase complex that specifically demethylates H3K9me2, a specific tag for epigenetic transcriptional activation, thereby acting as a corepressor. Has a role in regulating heterochromatin propagation and euchromatic transcription. This chain is SWM histone demethylase complex subunit phf2 (phf2), found in Schizosaccharomyces pombe (strain 972 / ATCC 24843) (Fission yeast).